Here is a 697-residue protein sequence, read N- to C-terminus: uncharacterized protein (697 aa).

A run of 5 helical transmembrane segments spans residues 45-65 (LCAV…LALL), 86-106 (TVAA…MGVV), 128-148 (VVVS…GMLA), 198-218 (VLLG…WWAL), and 280-300 (HLAI…ILAG). ABC transporter domains lie at 251-473 (VRLD…QPQH) and 477-696 (LELV…AGGM). Residues 285–292 (GANGSGKT) and 514–521 (GGNGSGKS) contribute to the ATP site. Residues 522 to 542 (TLAWIMAGLTIPTTGACLLDG) form a helical membrane-spanning segment.

It belongs to the ABC transporter superfamily.

The protein resides in the cell membrane. This is an uncharacterized protein from Mycobacterium tuberculosis (strain CDC 1551 / Oshkosh).